The primary structure comprises 445 residues: Phosphoglucosamine mutase (445 aa).

Ser-102 serves as the catalytic Phosphoserine intermediate. 4 residues coordinate Mg(2+): Ser-102, Asp-241, Asp-243, and Asp-245. The residue at position 102 (Ser-102) is a Phosphoserine.

The protein belongs to the phosphohexose mutase family. Requires Mg(2+) as cofactor. Post-translationally, activated by phosphorylation.

It carries out the reaction alpha-D-glucosamine 1-phosphate = D-glucosamine 6-phosphate. Catalyzes the conversion of glucosamine-6-phosphate to glucosamine-1-phosphate. The chain is Phosphoglucosamine mutase from Escherichia coli (strain 55989 / EAEC).